We begin with the raw amino-acid sequence, 139 residues long: MAITVHCDIVSAEQEIFSGTVQSLVAAGSYGDLGIMPGHAPLLTTLQAGPVRVVKENGDEEVIFVSGGFLEVQPHRVTVLANTATRARDLDEEAALKAQEHAKELLANQKPDVDYTRATAELVEAMARLRTIQQFRNNK.

The protein belongs to the ATPase epsilon chain family. F-type ATPases have 2 components, CF(1) - the catalytic core - and CF(0) - the membrane proton channel. CF(1) has five subunits: alpha(3), beta(3), gamma(1), delta(1), epsilon(1). CF(0) has three main subunits: a, b and c.

Its subcellular location is the cell inner membrane. Functionally, produces ATP from ADP in the presence of a proton gradient across the membrane. The polypeptide is ATP synthase epsilon chain (Marinomonas sp. (strain MWYL1)).